The sequence spans 131 residues: Protein SOB FIVE-LIKE 4 (131 aa).

Disordered stretches follow at residues 1-21 (MDKE…SSPI) and 40-131 (IYNY…YRMK). Residues 8–18 (SSESGWTTYLS) are compositionally biased toward polar residues. The SOFL-A motif lies at 11–16 (SGWTTY). Basic and acidic residues predominate over residues 46 to 58 (KVEHEEERNKDSD). Residues 60 to 69 (SMASDASSGP) carry the SOFL-B motif. Residues 79-109 (KALDLKNGKNEGNSKSKNDDDHHNHYHDGKK) are compositionally biased toward basic and acidic residues. The Nuclear localization signal motif lies at 107–114 (GKKTSNSY). A compositionally biased stretch (basic residues) spans 114 to 131 (YRKKDKKKRENKSTYRMK).

Belongs to the SOFL plant protein family. In terms of tissue distribution, expressed, at low levels, in seedlings, roots, flowers and siliques.

Its subcellular location is the cytoplasm. It localises to the nucleus. Functionally, involved in cytokinin-mediated development. The chain is Protein SOB FIVE-LIKE 4 from Arabidopsis thaliana (Mouse-ear cress).